The following is a 364-amino-acid chain: Probable endopolygalacturonase B (364 aa).

An N-terminal signal peptide occupies residues 1–20 (MHFFQSSLVAATMGAALVAA). Positions 21–29 (APAADLETR) are excised as a propeptide. Cysteines 32 and 47 form a disulfide. N-linked (GlcNAc...) asparagine glycans are attached at residues Asn138 and Asn141. PbH1 repeat units follow at residues 159 to 188 (SDHL…DVGS), 189 to 210 (STYI…AVNS), 211 to 231 (GEHI…SIGS), 240 to 261 (VNDV…RIKT), 269 to 291 (VTGV…VVQQ), and 303 to 324 (TNGV…TSSA). Asp203 serves as the catalytic Proton donor. Cysteines 205 and 221 form a disulfide. His225 is an active-site residue. Cys331 and Cys336 are oxidised to a cystine. The N-linked (GlcNAc...) asparagine glycan is linked to Asn338. An intrachain disulfide couples Cys355 to Cys364.

Belongs to the glycosyl hydrolase 28 family.

The protein resides in the secreted. It catalyses the reaction (1,4-alpha-D-galacturonosyl)n+m + H2O = (1,4-alpha-D-galacturonosyl)n + (1,4-alpha-D-galacturonosyl)m.. Its function is as follows. Involved in maceration and soft-rotting of plant tissue. Hydrolyzes the 1,4-alpha glycosidic bonds of de-esterified pectate in the smooth region of the plant cell wall. The chain is Probable endopolygalacturonase B (pgaB) from Aspergillus fumigatus (strain CBS 144.89 / FGSC A1163 / CEA10) (Neosartorya fumigata).